A 524-amino-acid chain; its full sequence is Cytochrome P450 52A6 (524 aa).

The chain crosses the membrane as a helical span at residues 17 to 34; that stretch reads WYTVITLAALVFLISSNI. Position 472 (C472) interacts with heme.

It belongs to the cytochrome P450 family. Requires heme as cofactor.

The protein localises to the membrane. In terms of biological role, together with an NADPH cytochrome P450 the enzyme system catalyzes the terminal hydroxylation as the first step in the assimilation of alkanes and fatty acids. Preferentially hydroxylates hexadecane. This Candida tropicalis (Yeast) protein is Cytochrome P450 52A6 (CYP52A6).